The chain runs to 519 residues: Membrane protein insertase YidC (519 aa).

6 helical membrane-spanning segments follow: residues 6–26, 298–318, 324–344, 390–410, 434–454, and 471–491; these read ILFV…FAQP, VDFG…VFFY, YGWA…PLTL, LGGC…FTML, FMQF…IGMF, and IMYI…SGLV.

The protein belongs to the OXA1/ALB3/YidC family. Type 1 subfamily. As to quaternary structure, interacts with the Sec translocase complex via SecD. Specifically interacts with transmembrane segments of nascent integral membrane proteins during membrane integration.

The protein resides in the cell inner membrane. Its function is as follows. Required for the insertion and/or proper folding and/or complex formation of integral membrane proteins into the membrane. Involved in integration of membrane proteins that insert both dependently and independently of the Sec translocase complex, as well as at least some lipoproteins. Aids folding of multispanning membrane proteins. This chain is Membrane protein insertase YidC, found in Endomicrobium trichonymphae.